The following is a 337-amino-acid chain: MAGQSPPVLGVGLIGSGSAQAAQVISNDQLSQRVDTNDEWIRTRTGIGRRRVSTADQTLVDLAAEAGRSALTMAGRSPQDLDLILLATSTPDDLFGSAPRVQAELGATNAVAFDLTAACSGFLFALVTAAQYLRTGAMRRALVIGADQLSRFVDWDDRRSCVLFGDGAGAVVLEASDEDGLLGFLLHSDGARGAVLNLPANDTSAPLIAGAEHRAGGYRPIVMNGQEVYKFAVREVPAVLQSLLKRCDVSADQLDWLLLHQANQRILDAVADRLSVPGAKVLSNLAAYGNTSAATIPLMLDEAVRDGRVSSGDLLASSGFGAGLSWGAALLRWQGPT.

Residues Cys119 and His260 contribute to the active site. Residues 261–265 (QANQR) are ACP-binding. Residue Asn290 is part of the active site.

Belongs to the thiolase-like superfamily. FabH family. As to quaternary structure, homodimer.

The protein localises to the cytoplasm. It catalyses the reaction malonyl-[ACP] + acetyl-CoA + H(+) = 3-oxobutanoyl-[ACP] + CO2 + CoA. It participates in lipid metabolism; fatty acid biosynthesis. Catalyzes the condensation reaction of fatty acid synthesis by the addition to an acyl acceptor of two carbons from malonyl-ACP. Catalyzes the first condensation reaction which initiates fatty acid synthesis and may therefore play a role in governing the total rate of fatty acid production. Possesses both acetoacetyl-ACP synthase and acetyl transacylase activities. Its substrate specificity determines the biosynthesis of branched-chain and/or straight-chain of fatty acids. This is Beta-ketoacyl-[acyl-carrier-protein] synthase III from Synechococcus sp. (strain WH7803).